A 352-amino-acid chain; its full sequence is Ferrochelatase (352 aa).

His-222 and Glu-303 together coordinate Fe cation.

It belongs to the ferrochelatase family.

The protein localises to the cytoplasm. It catalyses the reaction heme b + 2 H(+) = protoporphyrin IX + Fe(2+). The protein operates within porphyrin-containing compound metabolism; protoheme biosynthesis; protoheme from protoporphyrin-IX: step 1/1. In terms of biological role, catalyzes the ferrous insertion into protoporphyrin IX. This Brucella canis (strain ATCC 23365 / NCTC 10854 / RM-666) protein is Ferrochelatase.